A 458-amino-acid polypeptide reads, in one-letter code: Bifunctional protein GlmU (458 aa).

Residues 1–224 are pyrophosphorylase; sequence MTVIALAAGK…PKVAVGVNNQ (224 aa). UDP-N-acetyl-alpha-D-glucosamine-binding positions include 6-9, Lys20, Gln71, and 76-77; these read LAAG and GT. Asp99 lines the Mg(2+) pocket. UDP-N-acetyl-alpha-D-glucosamine contacts are provided by Gly136, Glu150, Asn165, and Asn222. Asn222 serves as a coordination point for Mg(2+). The segment at 225 to 245 is linker; sequence LELARATRLLFKRKALRLMED. Positions 246-458 are N-acetyltransferase; that stretch reads GVLMIDPRTV…TAETEEKEQV (213 aa). UDP-N-acetyl-alpha-D-glucosamine contacts are provided by Arg328 and Lys346. The active-site Proton acceptor is His358. UDP-N-acetyl-alpha-D-glucosamine contacts are provided by Tyr361 and Asn372. Acetyl-CoA is bound by residues 381–382, Ser401, Ser419, and Arg436; that span reads NY.

It in the N-terminal section; belongs to the N-acetylglucosamine-1-phosphate uridyltransferase family. The protein in the C-terminal section; belongs to the transferase hexapeptide repeat family. Homotrimer. Mg(2+) serves as cofactor.

Its subcellular location is the cytoplasm. The catalysed reaction is alpha-D-glucosamine 1-phosphate + acetyl-CoA = N-acetyl-alpha-D-glucosamine 1-phosphate + CoA + H(+). The enzyme catalyses N-acetyl-alpha-D-glucosamine 1-phosphate + UTP + H(+) = UDP-N-acetyl-alpha-D-glucosamine + diphosphate. It participates in nucleotide-sugar biosynthesis; UDP-N-acetyl-alpha-D-glucosamine biosynthesis; N-acetyl-alpha-D-glucosamine 1-phosphate from alpha-D-glucosamine 6-phosphate (route II): step 2/2. It functions in the pathway nucleotide-sugar biosynthesis; UDP-N-acetyl-alpha-D-glucosamine biosynthesis; UDP-N-acetyl-alpha-D-glucosamine from N-acetyl-alpha-D-glucosamine 1-phosphate: step 1/1. The protein operates within bacterial outer membrane biogenesis; LPS lipid A biosynthesis. In terms of biological role, catalyzes the last two sequential reactions in the de novo biosynthetic pathway for UDP-N-acetylglucosamine (UDP-GlcNAc). The C-terminal domain catalyzes the transfer of acetyl group from acetyl coenzyme A to glucosamine-1-phosphate (GlcN-1-P) to produce N-acetylglucosamine-1-phosphate (GlcNAc-1-P), which is converted into UDP-GlcNAc by the transfer of uridine 5-monophosphate (from uridine 5-triphosphate), a reaction catalyzed by the N-terminal domain. This Bdellovibrio bacteriovorus (strain ATCC 15356 / DSM 50701 / NCIMB 9529 / HD100) protein is Bifunctional protein GlmU.